Consider the following 272-residue polypeptide: Nuclear transcription factor Y subunit A-1 (272 aa).

Disordered stretches follow at residues 1-20 and 34-106; these read MQSKPGRENEEEVNNHHAVQ and SFGV…PALS. Polar residues-rich tracts occupy residues 46 to 61 and 82 to 92; these read IPSNSSSLDCPNGSES and KDSQAATSSRS. The Subunit association domain (SAD) motif lies at 175–198; it reads YVNAKQYEGILRRRKARAKAELER. The NFYA/HAP2-type DNA-binding region spans 205–230; sequence KPYLHESRHKHAMRRARASGGRFAKK. Residues 206–272 are disordered; the sequence is PYLHESRHKH…NETLNSSGAP (67 aa). Residues 211 to 221 are compositionally biased toward basic residues; that stretch reads SRHKHAMRRAR. A compositionally biased stretch (basic and acidic residues) spans 229–247; that stretch reads KKSEVEAGEDAGGRDRERG. 2 stretches are compositionally biased toward polar residues: residues 248–257 and 263–272; these read SATNSSGSEQ and NETLNSSGAP.

The protein belongs to the NFYA/HAP2 subunit family. As to quaternary structure, heterotrimeric transcription factor composed of three components, NF-YA, NF-YB and NF-YC. NF-YB and NF-YC must interact and dimerize for NF-YA association and DNA binding. Ubiquitous.

It localises to the nucleus. Functionally, stimulates the transcription of various genes by recognizing and binding to a CCAAT motif in promoters. This chain is Nuclear transcription factor Y subunit A-1 (NFYA1), found in Arabidopsis thaliana (Mouse-ear cress).